The primary structure comprises 129 residues: MKSFPRADRIGSSIQRGVSEILRKGLGDPRLDMATITGVKVSRDLGVAYVYYVIPGDTAGRAAAAAGFKSAEGFIKRSLAGMLKMKYMPDIRFRYDESFAYGQSIDTVLRELQTEKDDVPDSGRPPEDD.

Belongs to the RbfA family. In terms of assembly, monomer. Binds 30S ribosomal subunits, but not 50S ribosomal subunits or 70S ribosomes.

The protein localises to the cytoplasm. Its function is as follows. One of several proteins that assist in the late maturation steps of the functional core of the 30S ribosomal subunit. Associates with free 30S ribosomal subunits (but not with 30S subunits that are part of 70S ribosomes or polysomes). Required for efficient processing of 16S rRNA. May interact with the 5'-terminal helix region of 16S rRNA. The protein is Ribosome-binding factor A of Desulfosudis oleivorans (strain DSM 6200 / JCM 39069 / Hxd3) (Desulfococcus oleovorans).